Here is an 818-residue protein sequence, read N- to C-terminus: Phenylalanine--tRNA ligase beta subunit (818 aa).

A tRNA-binding domain is found at 39-148 (AAELQKFEVA…EDAVVGENFT (110 aa)). In terms of domain architecture, B5 spans 423–498 (PQKKPLDFSA…RIYGYDKIES (76 aa)). Positions 476, 482, 485, and 486 each coordinate Mg(2+). The 94-residue stretch at 724–817 (SDFQANFRDY…IEQKFQGTLR (94 aa)) folds into the FDX-ACB domain.

The protein belongs to the phenylalanyl-tRNA synthetase beta subunit family. Type 1 subfamily. As to quaternary structure, tetramer of two alpha and two beta subunits. Requires Mg(2+) as cofactor.

Its subcellular location is the cytoplasm. The enzyme catalyses tRNA(Phe) + L-phenylalanine + ATP = L-phenylalanyl-tRNA(Phe) + AMP + diphosphate + H(+). This Rickettsia felis (strain ATCC VR-1525 / URRWXCal2) (Rickettsia azadi) protein is Phenylalanine--tRNA ligase beta subunit.